The following is a 334-amino-acid chain: Geranylgeranyl pyrophosphate synthase idtG (334 aa).

Residues K49, R52, and H81 each coordinate isopentenyl diphosphate. Positions 88 and 92 each coordinate Mg(2+). Position 97 (R97) interacts with dimethylallyl diphosphate. Position 98 (R98) interacts with isopentenyl diphosphate. K175, T176, and Q209 together coordinate dimethylallyl diphosphate. D212 is a binding site for Mg(2+). Dimethylallyl diphosphate is bound by residues N216, K226, and K236.

It belongs to the FPP/GGPP synthase family. It depends on Mg(2+) as a cofactor.

It carries out the reaction isopentenyl diphosphate + dimethylallyl diphosphate = (2E)-geranyl diphosphate + diphosphate. The catalysed reaction is isopentenyl diphosphate + (2E)-geranyl diphosphate = (2E,6E)-farnesyl diphosphate + diphosphate. It catalyses the reaction isopentenyl diphosphate + (2E,6E)-farnesyl diphosphate = (2E,6E,10E)-geranylgeranyl diphosphate + diphosphate. Its pathway is secondary metabolite biosynthesis. Geranylgeranyl pyrophosphate synthase; part of the gene cluster that mediates the biosynthesis of paspalitrems, indole-diterpene (IDT) mycotoxins that are potent tremorgens in mammals. The geranylgeranyl diphosphate (GGPP) synthase idtG is proposed to catalyze the first step in IDT biosynthesis via catalysis of a series of iterative condensations of isopentenyl diphosphate (IPP) with dimethylallyl diphosphate (DMAPP), geranyl diphosphate (GPP), and farnesyl diphosphate (FPP), to form GGPP. Condensation of indole-3-glycerol phosphate with GGPP by the prenyltransferase idtC then forms 3-geranylgeranylindole (3-GGI). Epoxidation of the two terminal alkenes of the geranylgeranyl moiety by the FAD-dependent monooxygenase idtM, and cyclization by the terpene cyclase idtB then leads to the production of paspaline. The cytochrome P450 monooxygenase idtP then catalyzes oxidative elimination of the pendant methyl group at C-12 of paspaline and generates the C-10 ketone to yield 13-desoxypaxilline. The cytochrome P450 monooxygenase idtQ may catalyze the C-13 oxidation of 13-desoxypaxilline to afford paxilline. Considering that both paspalicine and paxilline were detected in C.paspali, idtQ also catalyzes the formation of paspalinine from 13-desoxypaxilline via paspalicine as an intermediate. Finally, the alpha-prenyltransferase idtF prenylates paspalinine at the C-20 or the C-21 positions to yield paspalitrems A and C, respectively. The hydroxylation of paspalitrem A at C-32 by a still unknown oxidase affords paspalitrem B. This is Geranylgeranyl pyrophosphate synthase idtG from Claviceps paspali (Rye ergot fungus).